Consider the following 198-residue polypeptide: GTP cyclohydrolase-2 (198 aa).

52–56 (RMHSE) contacts GTP. The Zn(2+) site is built by C57, C68, and C70. Residues Q73, 94–96 (EGR), and T116 each bind GTP. The Proton acceptor role is filled by D128. Residue R130 is the Nucleophile of the active site. T151 and K156 together coordinate GTP.

Belongs to the GTP cyclohydrolase II family. Zn(2+) is required as a cofactor.

The catalysed reaction is GTP + 4 H2O = 2,5-diamino-6-hydroxy-4-(5-phosphoribosylamino)-pyrimidine + formate + 2 phosphate + 3 H(+). It participates in cofactor biosynthesis; riboflavin biosynthesis; 5-amino-6-(D-ribitylamino)uracil from GTP: step 1/4. Functionally, catalyzes the conversion of GTP to 2,5-diamino-6-ribosylamino-4(3H)-pyrimidinone 5'-phosphate (DARP), formate and pyrophosphate. The chain is GTP cyclohydrolase-2 from Vibrio parahaemolyticus serotype O3:K6 (strain RIMD 2210633).